A 218-amino-acid chain; its full sequence is Probable 3-keto-L-gulonate-6-phosphate decarboxylase (218 aa).

D11 contacts substrate. Mg(2+) contacts are provided by E33 and D62. Residue R194 coordinates substrate.

It belongs to the HPS/KGPDC family. KGPDC subfamily. The cofactor is Mg(2+).

The catalysed reaction is 3-dehydro-L-gulonate 6-phosphate + H(+) = L-xylulose 5-phosphate + CO2. It participates in cofactor degradation; L-ascorbate degradation; D-xylulose 5-phosphate from L-ascorbate: step 2/4. Its function is as follows. Catalyzes the decarboxylation of 3-keto-L-gulonate-6-P into L-xylulose-5-P. Is involved in the anaerobic L-ascorbate utilization. This Mycoplasma pneumoniae (strain ATCC 29342 / M129 / Subtype 1) (Mycoplasmoides pneumoniae) protein is Probable 3-keto-L-gulonate-6-phosphate decarboxylase (ulaD).